Here is a 61-residue protein sequence, read N- to C-terminus: Large ribosomal subunit protein bL32 (61 aa).

A compositionally biased stretch (basic residues) spans Met1–His19. Residues Met1–Asp20 are disordered.

This sequence belongs to the bacterial ribosomal protein bL32 family.

In Bacteroides fragilis (strain YCH46), this protein is Large ribosomal subunit protein bL32.